Consider the following 337-residue polypeptide: Movement protein (337 aa).

The segment covering methionine 1 to leucine 11 has biased composition (polar residues). Disordered stretches follow at residues methionine 1–threonine 24 and serine 273–threonine 337.

It is found in the host cell junction. The protein localises to the host plasmodesma. Functionally, transports viral genome to neighboring plant cells directly through plasmosdesmata, without any budding. The movement protein allows efficient cell to cell propagation, by bypassing the host cell wall barrier. Acts by forming a tubular structure at the host plasmodesmata, enlarging it enough to allow free passage of virion capsids. This chain is Movement protein, found in Olive latent virus 2 (isolate Italy) (OLV-2).